A 1122-amino-acid chain; its full sequence is Histidine kinase CKI1 (1122 aa).

Topologically, residues 1-12 (MMVKVTKLVASR) are cytoplasmic. The chain crosses the membrane as a helical span at residues 13–33 (PIVVFCVLAFLVVVFECIWIS). The Extracellular portion of the chain corresponds to 34–345 (NWRTTTENLV…KHQAEKAKYQ (312 aa)). Residues 346 to 366 (LIVVMIFLGFGWPVWFVWFMM) traverse the membrane as a helical segment. The Cytoplasmic portion of the chain corresponds to 367–1122 (QATRREMHMR…VIREIESKRH (756 aa)). Residues 402–671 (NASHDIRGAL…CFQFNVLLTT (270 aa)) enclose the Histidine kinase domain. Residue H405 is modified to Phosphohistidine; by autocatalysis. Over residues 918 to 928 (AERSPKHKVQE) the composition is skewed to basic and acidic residues. Residues 918-981 (AERSPKHKVQ…QETSKPSDDE (64 aa)) form a disordered region. In terms of domain architecture, Response regulatory spans 987–1120 (RVLVVDDNFI…ANVIREIESK (134 aa)). A 4-aspartylphosphate modification is found at D1050.

As to quaternary structure, homodimer. Interacts with AHP2 and AHP3. Expressed in vascular tissues of inflorescence stems and floral organs, especially in procambium cells, and in siliques.

The protein resides in the cell membrane. It carries out the reaction ATP + protein L-histidine = ADP + protein N-phospho-L-histidine.. Functionally, essential protein. Functions as a histidine kinase and transmits the stress signal to a downstream MAPK cascade. This protein undergoes an ATP-dependent autophosphorylation at a conserved histidine residue in the kinase core, and a phosphoryl group is then transferred to a conserved aspartate residue in the receiver domain. Required for the development of megagametophyte in female gametophyte (embryo sac) independently of cytokinin. Contributes to vascular bundle formation and secondary growth in a cytokinin-independent manner, probably by promoting the maintenance of mitotic activity and/or identity of procambial cells. Seems to influence and promote the cytokinin signaling pathway. The protein is Histidine kinase CKI1 (CKI1) of Arabidopsis thaliana (Mouse-ear cress).